The chain runs to 973 residues: Translation initiation factor IF-2 (973 aa).

A disordered region spans residues 52-388 (PDQEEVKPAA…QAQKPAQPLE (337 aa)). 8 stretches are compositionally biased toward basic and acidic residues: residues 83 to 120 (ESRK…DHYK), 128 to 148 (VPSR…DKAR), 157 to 172 (QGAR…ERTR), 186 to 202 (VQQE…RPPF), 210 to 246 (PQHE…DKGA), 272 to 288 (RAGE…ETKP), 314 to 333 (LLDD…EKQK), and 343 to 360 (KSRE…ERLR). A compositionally biased stretch (low complexity) spans 374–386 (AKPQEQAQKPAQP). The 170-residue stretch at 472–641 (DRPCVVTVMG…LLVAEMSELK (170 aa)) folds into the tr-type G domain. Residues 481–488 (GHVDHGKT) form a G1 region. Position 481–488 (481–488 (GHVDHGKT)) interacts with GTP. The segment at 506–510 (GITQH) is G2. Positions 527-530 (DTPG) are G3. Residues 527–531 (DTPGH) and 581–584 (NKID) contribute to the GTP site. The tract at residues 581–584 (NKID) is G4. The interval 617–619 (SAL) is G5.

Belongs to the TRAFAC class translation factor GTPase superfamily. Classic translation factor GTPase family. IF-2 subfamily.

The protein resides in the cytoplasm. Its function is as follows. One of the essential components for the initiation of protein synthesis. Protects formylmethionyl-tRNA from spontaneous hydrolysis and promotes its binding to the 30S ribosomal subunits. Also involved in the hydrolysis of GTP during the formation of the 70S ribosomal complex. The sequence is that of Translation initiation factor IF-2 from Pelotomaculum thermopropionicum (strain DSM 13744 / JCM 10971 / SI).